A 1199-amino-acid polypeptide reads, in one-letter code: MASAGTQHYSIGLRQKNSFKQSGPSGTVPATPPEKPSEGRVWPQAHQQVKPIWKLEKKQVETLSAGLGPGLLGVPPQPAYFFCPSTLCSSGTTAVIAGHSSSCYLHSLPDLFNSTLLYRRSSYRQKPYQQLESFCLRSSPSEKSPFSLPQKSLPVSLTANKATSSMVFSMAQPMASSSTEPYLCLAAAGENPSGKSLASAISGKIPSPLSSSYKPMLNNNSFMWPNSTPVPLLQTTQGLKPVSPPKIQPVSWHHSGGTGDCAPQPVDHKVPKSIGTVPADASAHIALSTASSHDTSTTSVASSWYNRNNLAMRAEPLSCALDDSSDSQDPTKEIRFTEAVRKLTARGFEKMPRQGCQLEQSSFLNPSFQWNVLNRSRRWKPPAVNQQFPQEDAGSVRRVLPGASDTLGLDNTVFCTKRISIHLLASHASGLNHNPACESVIDSSAFGEGKAPGPPFPQTLGIANVATRLSSIQLGQSEKERPEEARELDSSDRDISSATDLQPDQAETEDTEEELVDGLEDCCSRDENEEEEGDSECSSLSAVSPSESVAMISRSCMEILTKPLSNHEKVVRPALIYSLFPNVPPTIYFGTRDERVEKLPWEQRKLLRWKMSTVTPNIVKQTIGRSHFKISKRNDDWLGCWGHHMKSPSFRSIREHQKLNHFPGSFQIGRKDRLWRNLSRMQSRFGKKEFSFFPQSFILPQDAKLLRKAWESSSRQKWIVKPPASARGIGIQVIHKWSQLPKRRPLLVQRYLHKPYLISGSKFDLRIYVYVTSYDPLRIYLFSDGLVRFASCKYSPSMKSLGNKFMHLTNYSVNKKNAEYQANADEMACQGHKWALKALWNYLSQKGVNSDAIWEKIKDVVVKTIISSEPYVTSLLKMYVRRPYSCHELFGFDIMLDENLKPWVLEVNISPSLHSSSPLDISIKGQMIRDLLNLAGFVLPNAEDIISSPSSCSSSTTSLPTSPGDKCRMAPEHVTAQKMKKAYYLTQKIPDQDFYASVLDVLTPDDVRILVEMEDEFSRRGQFERIFPSHISSRYLRFFEQPRYFNILTTQWEQKYHGNKLKGVDLLRSWCYKGFHMGVVSDSAPVWSLPTSLLTISKDDVILNAFSKSETSKLGKQSSCEVSLLLSEDGTTPKSKKTQAGLSPYPQKPSSSKDSEDTSKEPSLSTQTLPVIKCSGQTSRLSASSTFQSISDSLLAVSP.

The segment covering 1–25 (MASAGTQHYSIGLRQKNSFKQSGPS) has biased composition (polar residues). Disordered regions lie at residues 1 to 43 (MASA…RVWP), 472 to 517 (IQLG…ELVD), and 525 to 544 (RDEN…SAVS). Basic and acidic residues predominate over residues 477–495 (SEKERPEEARELDSSDRDI). A compositionally biased stretch (acidic residues) spans 506-517 (AETEDTEEELVD). The TTL domain occupies 604–947 (RKLLRWKMST…VLPNAEDIIS (344 aa)). At serine 691 the chain carries Phosphoserine. ATP is bound by residues lysine 721, 727–728 (RG), 749–752 (QRYL), and 762–764 (KFD). Arginine 727 is a binding site for a protein. An L-glutamate-binding site is contributed by arginine 788. 809–810 (TN) contacts ATP. 3 residues coordinate L-glutamate: tyrosine 811, serine 812, and lysine 833. The Mg(2+) site is built by aspartate 893, glutamate 906, and asparagine 908. Positions 918–1029 (PLDISIKGQM…RGQFERIFPS (112 aa)) are c-MTBD region. Lysine 924 provides a ligand contact to L-glutamate. The segment covering 1130–1141 (GTTPKSKKTQAG) has biased composition (polar residues). Residues 1130–1199 (GTTPKSKKTQ…ISDSLLAVSP (70 aa)) form a disordered region. The segment covering 1151–1160 (SSKDSEDTSK) has biased composition (basic and acidic residues). Polar residues predominate over residues 1164-1192 (LSTQTLPVIKCSGQTSRLSASSTFQSISD).

Belongs to the tubulin--tyrosine ligase family. Mg(2+) serves as cofactor.

The protein resides in the cytoplasm. Its subcellular location is the cell projection. The protein localises to the cilium. It localises to the cytoskeleton. It is found in the cilium basal body. The catalysed reaction is L-glutamyl-[protein] + L-glutamate + ATP = gamma-L-glutamyl-L-glutamyl-[protein] + ADP + phosphate + H(+). Monoglutamylase which modifies both tubulin and non-tubulin proteins, adding a single glutamate on the gamma-carboxyl group of specific glutamate residues of target proteins. Involved in the side-chain initiation step of the polyglutamylation reaction but not in the elongation step. Preferentially modifies beta-tail tubulin over the alpha-tubulin. Monoglutamylates nucleosome assembly proteins NAP1L1 and NAP1L4. Monoglutamylates nucleotidyltransferase CGAS, leading to inhibition of CGAS catalytic activity, thereby preventing antiviral defense function. Involved in KLF4 glutamylation which impedes its ubiquitination, thereby leading to somatic cell reprogramming, pluripotency maintenance and embryogenesis. The polypeptide is Tubulin monoglutamylase TTLL4 (Homo sapiens (Human)).